A 275-amino-acid polypeptide reads, in one-letter code: Formamidopyrimidine-DNA glycosylase (275 aa).

Pro-2 acts as the Schiff-base intermediate with DNA in catalysis. Catalysis depends on Glu-3, which acts as the Proton donor. Lys-58 serves as the catalytic Proton donor; for beta-elimination activity. Positions 93, 111, and 156 each coordinate DNA. The segment at 241-275 adopts an FPG-type zinc-finger fold; sequence FVYDRAGQPCRVCNTPIRQIVQGQRSTYFCPTCQR. Residue Arg-265 is the Proton donor; for delta-elimination activity of the active site.

It belongs to the FPG family. As to quaternary structure, monomer. Zn(2+) is required as a cofactor.

The enzyme catalyses Hydrolysis of DNA containing ring-opened 7-methylguanine residues, releasing 2,6-diamino-4-hydroxy-5-(N-methyl)formamidopyrimidine.. The catalysed reaction is 2'-deoxyribonucleotide-(2'-deoxyribose 5'-phosphate)-2'-deoxyribonucleotide-DNA = a 3'-end 2'-deoxyribonucleotide-(2,3-dehydro-2,3-deoxyribose 5'-phosphate)-DNA + a 5'-end 5'-phospho-2'-deoxyribonucleoside-DNA + H(+). In terms of biological role, involved in base excision repair of DNA damaged by oxidation or by mutagenic agents. Acts as a DNA glycosylase that recognizes and removes damaged bases. Has a preference for oxidized purines, such as 7,8-dihydro-8-oxoguanine (8-oxoG). Has AP (apurinic/apyrimidinic) lyase activity and introduces nicks in the DNA strand. Cleaves the DNA backbone by beta-delta elimination to generate a single-strand break at the site of the removed base with both 3'- and 5'-phosphates. The protein is Formamidopyrimidine-DNA glycosylase of Burkholderia lata (strain ATCC 17760 / DSM 23089 / LMG 22485 / NCIMB 9086 / R18194 / 383).